Here is a 98-residue protein sequence, read N- to C-terminus: NADH-ubiquinone oxidoreductase chain 4L (98 aa).

The next 3 helical transmembrane spans lie at Pro-2–Phe-22, Ser-29–Leu-49, and Ile-61–Val-81.

Belongs to the complex I subunit 4L family. In terms of assembly, core subunit of respiratory chain NADH dehydrogenase (Complex I) which is composed of 45 different subunits.

The protein resides in the mitochondrion inner membrane. It catalyses the reaction a ubiquinone + NADH + 5 H(+)(in) = a ubiquinol + NAD(+) + 4 H(+)(out). Its function is as follows. Core subunit of the mitochondrial membrane respiratory chain NADH dehydrogenase (Complex I) which catalyzes electron transfer from NADH through the respiratory chain, using ubiquinone as an electron acceptor. Part of the enzyme membrane arm which is embedded in the lipid bilayer and involved in proton translocation. The polypeptide is NADH-ubiquinone oxidoreductase chain 4L (MT-ND4L) (Microcebus griseorufus (Gray-brown mouse lemur)).